Here is a 1069-residue protein sequence, read N- to C-terminus: DNA annealing helicase and endonuclease ZRANB3 (1069 aa).

The Helicase ATP-binding domain maps to 46 to 208; that stretch reads VFALRRDGRC…FMQIEALFPQ (163 aa). The interval 46 to 481 is DNA annealing helicase activity; sequence VFALRRDGRC…GRKEKLQATE (436 aa). 59–66 lines the ATP pocket; that stretch reads DEMGLGKT. Positions 157 to 160 match the DEAH box motif; the sequence is DESH. The Helicase C-terminal domain occupies 325 to 485; the sequence is AVKDYIKMLL…KLQATEDDKE (161 aa). The short motif at 518 to 525 is the PIP-box element; that stretch reads QHDIRSFF. Residues 617-646 form a RanBP2-type zinc finger; sequence PEKGWQCGFCTFLNNPGLPYCEMCENPRSR. The interval 648 to 720 is disordered; the sequence is AGRNHLQDNN…PEIGQLNNSG (73 aa). Composition is skewed to basic and acidic residues over residues 652–661 and 677–707; these read HLQDNNKNDE and ECER…EDRL. Residues 1001 to 1041 enclose the HNH domain; the sequence is PGEGHFWQVDHIRPVYEGGGQCSLDNLQTLCTVCHKERTAQ. The endonuclease activity stretch occupies residues 1001-1069; the sequence is PGEGHFWQVD…SDITRFLVKK (69 aa). The short motif at 1064 to 1068 is the APIM motif element; the sequence is RFLVK.

This sequence belongs to the SNF2/RAD54 helicase family. Interacts (via PIP-box and RanBP2-type zinc finger) with PCNA (when PCNA is polyubiquitinated via 'Lys-63'-linked polyubiquitin).

It is found in the nucleus. It localises to the chromosome. DNA annealing helicase and endonuclease required to maintain genome stability at stalled or collapsed replication forks by facilitating fork restart and limiting inappropriate recombination that could occur during template switching events. Recruited to the sites of stalled DNA replication by polyubiquitinated PCNA and acts as a structure-specific endonuclease that cleaves the replication fork D-loop intermediate, generating an accessible 3'-OH group in the template of the leading strand, which is amenable to extension by DNA polymerase. In addition to endonuclease activity, also catalyzes the fork regression via annealing helicase activity in order to prevent disintegration of the replication fork and the formation of double-strand breaks. The polypeptide is DNA annealing helicase and endonuclease ZRANB3 (Zranb3) (Mus musculus (Mouse)).